The sequence spans 168 residues: Xanthine-guanine phosphoribosyltransferase (168 aa).

Residues 43 to 44 (RG) and 102 to 110 (DDLVDTGAT) contribute to the 5-phospho-alpha-D-ribose 1-diphosphate site. Aspartate 103 is a Mg(2+) binding site. Guanine-binding residues include aspartate 106 and isoleucine 149. Aspartate 106 and isoleucine 149 together coordinate xanthine. Residues 106-110 (DTGAT) and 148-149 (WI) contribute to the GMP site.

Belongs to the purine/pyrimidine phosphoribosyltransferase family. XGPT subfamily. Homotetramer. Mg(2+) serves as cofactor.

The protein localises to the cell inner membrane. It catalyses the reaction GMP + diphosphate = guanine + 5-phospho-alpha-D-ribose 1-diphosphate. The catalysed reaction is XMP + diphosphate = xanthine + 5-phospho-alpha-D-ribose 1-diphosphate. It carries out the reaction IMP + diphosphate = hypoxanthine + 5-phospho-alpha-D-ribose 1-diphosphate. Its pathway is purine metabolism; GMP biosynthesis via salvage pathway; GMP from guanine: step 1/1. The protein operates within purine metabolism; XMP biosynthesis via salvage pathway; XMP from xanthine: step 1/1. Its function is as follows. Purine salvage pathway enzyme that catalyzes the transfer of the ribosyl-5-phosphate group from 5-phospho-alpha-D-ribose 1-diphosphate (PRPP) to the N9 position of the 6-oxopurines guanine and xanthine to form the corresponding ribonucleotides GMP (guanosine 5'-monophosphate) and XMP (xanthosine 5'-monophosphate), with the release of PPi. To a lesser extent, also acts on hypoxanthine. This Nitrobacter hamburgensis (strain DSM 10229 / NCIMB 13809 / X14) protein is Xanthine-guanine phosphoribosyltransferase.